The chain runs to 393 residues: MKLAKRVSALTPSTTLAITAKAKELKAAGHDVIGLGAGEPDFNTPQHIIDAAVRSMNEGHTKYTPSGGLAELKNSIAEKFKRDQNIEYKPSQIIVCTGAKHALYTLFQVILDEEDEVIIPTPYWVSYPEQVKLAGGKPVYVEGLEENHFKISPEQLKNAITEKTKAIVINSPSNPTGVMYTEEELSALGEVCLEHDILIVSDEIYEKLTYGGKKHVSIAQLSDRLKEQTVIINGVSKSHSMTGWRIGYAAGSEDIIKAMTNLASHSTSNPTSIAQYGAIAAYNGPSEPLEEMREAFEHRLNTIYAKLIEIPGFSCVKPEGAFYLFPNAKEAAQSCGFKDVDEFVKALLEEEKVAIVPGSGFGSPENVRLSYATSLDLLEEAIERIKRFVEKHS.

3 residues coordinate L-aspartate: G38, W124, and N174. K237 is modified (N6-(pyridoxal phosphate)lysine).

The protein belongs to the class-I pyridoxal-phosphate-dependent aminotransferase family. In terms of assembly, homodimer. The cofactor is pyridoxal 5'-phosphate.

Its subcellular location is the cytoplasm. It catalyses the reaction L-aspartate + 2-oxoglutarate = oxaloacetate + L-glutamate. This Bacillus subtilis (strain 168) protein is Aspartate aminotransferase (aspB).